The sequence spans 209 residues: Uracil phosphoribosyltransferase (209 aa).

5-phospho-alpha-D-ribose 1-diphosphate-binding positions include arginine 79, arginine 104, and 131-139 (DPMLATGGS). Residues isoleucine 194 and 199–201 (GDA) contribute to the uracil site. Aspartate 200 contacts 5-phospho-alpha-D-ribose 1-diphosphate.

It belongs to the UPRTase family. It depends on Mg(2+) as a cofactor.

It catalyses the reaction UMP + diphosphate = 5-phospho-alpha-D-ribose 1-diphosphate + uracil. Its pathway is pyrimidine metabolism; UMP biosynthesis via salvage pathway; UMP from uracil: step 1/1. Its activity is regulated as follows. Allosterically activated by GTP. Catalyzes the conversion of uracil and 5-phospho-alpha-D-ribose 1-diphosphate (PRPP) to UMP and diphosphate. The sequence is that of Uracil phosphoribosyltransferase from Enterococcus faecalis (strain ATCC 700802 / V583).